Reading from the N-terminus, the 284-residue chain is MSDRLAVLSQYLLPKQALTAVMGRLAQARAGDLTTAVIRRFIARYGVDMSEAADSDPAAYASFNEFFTRALKPGVRPLASADWVCPVDGAISQIGAIEGEQIFQAKGHSYSATALVGGDAQLARQFDNGHFATIYLSPRDYHRIHMPCAGRLRRMIYVPGELFSVNPVTARGVPGLFARNERVVCVFDTDHGPMVLVLVGATIVGSMGTVWHGIVNPPRPGRIQDWRYDDQSIVLGQGEEMGRFQLGSTVVMLFPASAGLRFNGQWTHAAPVRLGQKMAGRNEA.

Active-site charge relay system; for autoendoproteolytic cleavage activity residues include D88, H145, and S248. The active-site Schiff-base intermediate with substrate; via pyruvic acid; for decarboxylase activity is S248. S248 is modified (pyruvic acid (Ser); by autocatalysis).

It belongs to the phosphatidylserine decarboxylase family. PSD-B subfamily. Prokaryotic type I sub-subfamily. In terms of assembly, heterodimer of a large membrane-associated beta subunit and a small pyruvoyl-containing alpha subunit. Requires pyruvate as cofactor. Post-translationally, is synthesized initially as an inactive proenzyme. Formation of the active enzyme involves a self-maturation process in which the active site pyruvoyl group is generated from an internal serine residue via an autocatalytic post-translational modification. Two non-identical subunits are generated from the proenzyme in this reaction, and the pyruvate is formed at the N-terminus of the alpha chain, which is derived from the carboxyl end of the proenzyme. The autoendoproteolytic cleavage occurs by a canonical serine protease mechanism, in which the side chain hydroxyl group of the serine supplies its oxygen atom to form the C-terminus of the beta chain, while the remainder of the serine residue undergoes an oxidative deamination to produce ammonia and the pyruvoyl prosthetic group on the alpha chain. During this reaction, the Ser that is part of the protease active site of the proenzyme becomes the pyruvoyl prosthetic group, which constitutes an essential element of the active site of the mature decarboxylase.

The protein resides in the cell membrane. The enzyme catalyses a 1,2-diacyl-sn-glycero-3-phospho-L-serine + H(+) = a 1,2-diacyl-sn-glycero-3-phosphoethanolamine + CO2. It participates in phospholipid metabolism; phosphatidylethanolamine biosynthesis; phosphatidylethanolamine from CDP-diacylglycerol: step 2/2. Functionally, catalyzes the formation of phosphatidylethanolamine (PtdEtn) from phosphatidylserine (PtdSer). The chain is Phosphatidylserine decarboxylase proenzyme from Delftia acidovorans (strain DSM 14801 / SPH-1).